A 365-amino-acid polypeptide reads, in one-letter code: sn-glycerol-3-phosphate import ATP-binding protein UgpC (365 aa).

The ABC transporter domain maps to 4 to 234 (LSLRNVQKHY…PASTFVAGFI (231 aa)). ATP is bound at residue 36 to 43 (GPSGCGKS).

It belongs to the ABC transporter superfamily. sn-glycerol-3-phosphate importer (TC 3.A.1.1.3) family. The complex is composed of two ATP-binding proteins (UgpC), two transmembrane proteins (UgpA and UgpE) and a solute-binding protein (UgpB).

The protein localises to the cell inner membrane. It carries out the reaction sn-glycerol 3-phosphate(out) + ATP + H2O = sn-glycerol 3-phosphate(in) + ADP + phosphate + H(+). Its function is as follows. Part of the ABC transporter complex UgpBAEC involved in sn-glycerol-3-phosphate (G3P) import. Responsible for energy coupling to the transport system. The chain is sn-glycerol-3-phosphate import ATP-binding protein UgpC from Ralstonia nicotianae (strain ATCC BAA-1114 / GMI1000) (Ralstonia solanacearum).